Consider the following 126-residue polypeptide: Small ribosomal subunit protein bS16 (126 aa).

The tract at residues 87–126 is disordered; the sequence is ARSNPEKALPGKRALERVAEKKQKAEDAAAAAAAEASAAE. A compositionally biased stretch (basic and acidic residues) spans 99–113; the sequence is RALERVAEKKQKAED. The segment covering 114 to 126 has biased composition (low complexity); that stretch reads AAAAAAAEASAAE.

Belongs to the bacterial ribosomal protein bS16 family.

In Agrobacterium fabrum (strain C58 / ATCC 33970) (Agrobacterium tumefaciens (strain C58)), this protein is Small ribosomal subunit protein bS16.